The following is a 270-amino-acid chain: Feruloyl esterase C (270 aa).

The first 21 residues, Met1 to Gly21, serve as a signal peptide directing secretion.

It belongs to the faeC family.

The protein resides in the secreted. The enzyme catalyses feruloyl-polysaccharide + H2O = ferulate + polysaccharide.. Involved in degradation of plant cell walls. Hydrolyzes the feruloyl-arabinose ester bond in arabinoxylans, and the feruloyl-galactose ester bond in pectin. Active against paranitrophenyl-acetate, methyl ferulate and wheat arabinoxylan. The polypeptide is Feruloyl esterase C (faeC) (Emericella nidulans (strain FGSC A4 / ATCC 38163 / CBS 112.46 / NRRL 194 / M139) (Aspergillus nidulans)).